A 307-amino-acid chain; its full sequence is Ribulose bisphosphate carboxylase/oxygenase activase, chloroplastic (307 aa).

Residues 1–46 (MSIPDDKEAGTIDEFLQKEGVLDILQKLDHDLVGLKPVKDRVREIA) constitute a chloroplast transit peptide. 73-80 (GSPGTGKT) serves as a coordination point for ATP.

The protein belongs to the CbxX/CfxQ family. In terms of assembly, forms homooligomers. Forms heterohexameric rings with the plastid-encoded Rca subunit consisting of 3 of each nuclear- and plastidial-encoded subunits that alternate in the ring.

Its subcellular location is the plastid. It is found in the chloroplast. In terms of biological role, required for the expression of ribulose 1,5-bisphosphate carboxylase/oxygenase (RuBisCo). ATPase involved in the activation of red-type RuBisCo, which tends to form inactive complexes with its substrate ribulose 1,5-bisphosphate (RuBP). Catalyzes the release of RuBP from inhibited RuBisCo in an ATP-dependent manner. Activation of RuBisCO involves the ATP-dependent carboxylation of the epsilon-amino group of lysine leading to a carbamate structure. The nuclear-encoded subunit plays a more critical role in activase function than the plastidial-encoded subunit. This chain is Ribulose bisphosphate carboxylase/oxygenase activase, chloroplastic, found in Cyanidioschyzon merolae (strain NIES-3377 / 10D) (Unicellular red alga).